We begin with the raw amino-acid sequence, 696 residues long: MPSDILVVAALGRPFTLGMLYDARNDKLIPGFTLWEDEVIEESTVESSQPSSAFEIIASDSIDDKSSLMEIEASLKASFLGGLVEVGGSAKYLNNQKKFKNQSRVTLQYKATTNFKQLMTNLGTKHVEYSELFENIQATHVVIGILYGANAFFVFDSNKVDSTNVQEIQGQMEAVIKKIPSVEISGKASVQLTSEETDITNSFSCEFHGDFFLTSNPTTFEDAVKTYQQLPQMMGKDNAVPMTVWLVPMVNFYSEAPQLMADSSTPILRKVRNTLEAIVQVQMRCNDALDDPTVNLFTEVQKKLSDFQIICDDHMSKLQATIAKKLFAIRSGDEDESALVNLFEENLQSPFNTESLNMWMEFEEREINVLKSCMDILTKAKPKVIFNQGVLFKELYDSKVKHGLCYVFTNVTKNDDFLTVLNDFLDSPQSRPKKLRPSPKDYWYSYDDIPEMMREKAHLFRNLAKEMNNRCVHFFVTAINNPKQEGAGIHYYRESIQIIHEFTKPHMPGVETIKDRRELQWYDCELTLDTETAHQVLTLSEGNKRQCRGVRVTRRSLREFSHFQQVMCHQGAEWTPLLGVRVAGHVSAGVTYKGISRKTSTPDSSLGKNQKSWVFEYTKKSGYQQIHNGKNARVTVSSIGFKQLGVYLDWPAGTLSFYIGQQSLGDSSPHLPHQILRGCLSSLPDWGCTTESQWSN.

Residues 506 to 696 (HMPGVETIKD…GCTTESQWSN (191 aa)) enclose the B30.2/SPRY domain.

Belongs to the SNTX/VTX toxin family. In terms of assembly, tetramer composed of 2 alpha and 2 beta subunits. In terms of processing, glycosylated. In terms of tissue distribution, expressed by the venom gland.

It localises to the secreted. This lethal (towards mice) toxin induces hemolytic, cytolytic and hypotensive activities. Inhibits calcium channels and may activate ATP-sensitive potassium channels in frog atrial heart muscle. In guinea-pig ventricular myocytes, it modulates calcium channel activity through the beta-adrenoceptor-cAMP-PKA pathway (ADRB). The polypeptide is Verrucotoxin subunit beta (Synanceia verrucosa (Reef stonefish)).